The chain runs to 148 residues: UPF0756 membrane protein NMC1845 (148 aa).

A run of 4 helical transmembrane segments spans residues 13–35 (LILL…LLLM), 50–70 (HGLN…LVSG), 80–100 (FLNF…WLAG), and 121–141 (VIGV…AGIL).

The protein belongs to the UPF0756 family.

The protein resides in the cell membrane. In Neisseria meningitidis serogroup C / serotype 2a (strain ATCC 700532 / DSM 15464 / FAM18), this protein is UPF0756 membrane protein NMC1845.